A 345-amino-acid polypeptide reads, in one-letter code: GTPase Obg (345 aa).

Residues 1 to 158 form the Obg domain; the sequence is MFIDSVKITL…RLVRLELKLI (158 aa). Positions 159–339 constitute an OBG-type G domain; it reads ADVGLVGFPN…LKFMLLEEIK (181 aa). GTP contacts are provided by residues 165 to 172, 190 to 194, 212 to 215, 280 to 283, and 320 to 322; these read GFPNVGKS, FTTLT, DIPG, SKSD, and SSL. Residues Ser-172 and Thr-192 each contribute to the Mg(2+) site.

The protein belongs to the TRAFAC class OBG-HflX-like GTPase superfamily. OBG GTPase family. In terms of assembly, monomer. The cofactor is Mg(2+).

The protein localises to the cytoplasm. In terms of biological role, an essential GTPase which binds GTP, GDP and possibly (p)ppGpp with moderate affinity, with high nucleotide exchange rates and a fairly low GTP hydrolysis rate. Plays a role in control of the cell cycle, stress response, ribosome biogenesis and in those bacteria that undergo differentiation, in morphogenesis control. This is GTPase Obg from Campylobacter jejuni subsp. jejuni serotype O:6 (strain 81116 / NCTC 11828).